The chain runs to 248 residues: Ribosomal RNA small subunit methyltransferase J (248 aa).

S-adenosyl-L-methionine contacts are provided by residues 101 to 102 (RD), 117 to 118 (ER), 153 to 154 (SS), and D171.

This sequence belongs to the methyltransferase superfamily. RsmJ family.

The protein resides in the cytoplasm. It carries out the reaction guanosine(1516) in 16S rRNA + S-adenosyl-L-methionine = N(2)-methylguanosine(1516) in 16S rRNA + S-adenosyl-L-homocysteine + H(+). Functionally, specifically methylates the guanosine in position 1516 of 16S rRNA. The sequence is that of Ribosomal RNA small subunit methyltransferase J from Serratia proteamaculans (strain 568).